Reading from the N-terminus, the 122-residue chain is Prefoldin subunit 1 (122 aa).

It belongs to the prefoldin subunit beta family. Heterohexamer of two PFD-alpha type and four PFD-beta type subunits.

Functionally, binds specifically to cytosolic chaperonin (c-CPN) and transfers target proteins to it. Binds to nascent polypeptide chain and promotes folding in an environment in which there are many competing pathways for nonnative proteins. In Danio rerio (Zebrafish), this protein is Prefoldin subunit 1 (pfdn1).